The sequence spans 1496 residues: Rap guanine nucleotide exchange factor 2 (1496 aa).

Disordered regions lie at residues 40 to 59 (HVSS…SSSL) and 68 to 101 (SEAG…SDPL). Residues 83 to 94 (VDSEDDDDEEDI) show a composition bias toward acidic residues. 135-254 (AFANMTMSVR…VEEEGEIVMV (120 aa)) contacts a nucleoside 3',5'-cyclic phosphate. The 114-residue stretch at 267–380 (KGHIVIKGTS…RLLNIACAAK (114 aa)) folds into the N-terminal Ras-GEF domain. Residues 385–470 (LMTLTKPSRE…ITVKTNLFVF (86 aa)) form the PDZ domain. Residue S501 is modified to Phosphoserine. The Ras-associating domain maps to 606–692 (PDQVLRVFKA…GRYYLKNNME (87 aa)). T644 bears the Phosphothreonine; by PLK2 mark. The Ras-GEF domain occupies 717–944 (STVEVATQLS…SQGSANATVL (228 aa)). A Phosphoserine; by PLK2 modification is found at S806. A Phosphoserine modification is found at S930. Residues S933 and S1022 each carry the phosphoserine; by PLK2 modification. The tract at residues 1002–1051 (PATSTLPKNPGDKKPVKSETSPVAPRAGPQQKVQPQQPLAQPQPPHKVSQ) is disordered. The span at 1030-1041 (PQQKVQPQQPLA) shows a compositional bias: low complexity. Phosphoserine occurs at positions 1079, 1088, 1094, 1115, 1119, and 1158. The tract at residues 1093 to 1159 (GSLERHRKQA…RSSIVSNSSF (67 aa)) is disordered. 2 stretches are compositionally biased toward low complexity: residues 1110–1124 (SSQL…QSSP) and 1140–1159 (SDSG…NSSF). S1175 carries the phosphoserine; by PLK2 modification. Disordered stretches follow at residues 1224 to 1256 (STEE…SGSH), 1303 to 1369 (STKY…EEAK), and 1390 to 1496 (RKEG…VSAV). Basic and acidic residues predominate over residues 1227-1237 (ELSHDQGDRAS). Polar residues-rich tracts occupy residues 1246–1256 (GSWTSCSSGSH) and 1306–1330 (YNRQ…SSTG). Residues 1440–1455 (PTEAPAPGQTPPAAAA) show a composition bias toward low complexity. Acidic residues predominate over residues 1485-1496 (AEEDEDEQVSAV).

It belongs to the RAPGEF2 family. In terms of assembly, found in a complex, at least composed of KIDINS220, MAGI2, NTRK1 and RAPGEF2; the complex is mainly formed at late endosomes in a neuronal growth factor (NGF)-dependent manner. Interacts (via C-terminal domain) with NEDD4 (via WW domains); this interaction leads to ubiquitination and degradation via the proteasome pathway in a cAMP-independent manner. Interacts with MAGI1 (via PDZ domain). Interacts with ADRB1 (via C-terminal PDZ motif); the interaction is direct. Interacts (via Ras-associating domain) with RAP1A (via GTP-bound active form). Interacts weakly with HRAS (via GDP- and GTP-bound forms). Interacts (via C-terminal domain) with MAGI2 (via PDZ and WW domains). Interacts with CDH1, CTNNB1 and TJP1. Ubiquitinated by NEDD4, leading to proteasomal degradation. In terms of processing, phosphorylation by PLK2 promotes its activity. Expressed in all layers of the cerebral cortex, hippocampus and cerebellum. Expressed in the cortical plate, cingulate cortex and the subventricular zone. Expressed in neurons and endocrine cells (at protein level). Expressed in melanoma cells.

It localises to the cytoplasm. The protein localises to the perinuclear region. The protein resides in the cell membrane. It is found in the late endosome. Its subcellular location is the cell junction. Its function is as follows. Functions as a guanine nucleotide exchange factor (GEF), which activates Rap and Ras family of small GTPases by exchanging bound GDP for free GTP in a cAMP-dependent manner. Serves as a link between cell surface receptors and Rap/Ras GTPases in intracellular signaling cascades. Also acts as an effector for Rap1 by direct association with Rap1-GTP thereby leading to the amplification of Rap1-mediated signaling. Shows weak activity on HRAS. It is controversial whether RAPGEF2 binds cAMP and cGMP or not. Its binding to ligand-activated beta-1 adrenergic receptor ADRB1 leads to the Ras activation through the G(s)-alpha signaling pathway. Involved in the cAMP-induced Ras and Erk1/2 signaling pathway that leads to sustained inhibition of long term melanogenesis by reducing dendrite extension and melanin synthesis. Also provides inhibitory signals for cell proliferation of melanoma cells and promotes their apoptosis in a cAMP-independent nanner. Regulates cAMP-induced neuritogenesis by mediating the Rap1/B-Raf/ERK signaling through a pathway that is independent on both PKA and RAPGEF3/RAPGEF4. Involved in neuron migration and in the formation of the major forebrain fiber connections forming the corpus callosum, the anterior commissure and the hippocampal commissure during brain development. Involved in neuronal growth factor (NGF)-induced sustained activation of Rap1 at late endosomes and in brain-derived neurotrophic factor (BDNF)-induced axon outgrowth of hippocampal neurons. Plays a role in the regulation of embryonic blood vessel formation and in the establishment of basal junction integrity and endothelial barrier function. May be involved in the regulation of the vascular endothelial growth factor receptor KDR and cadherin CDH5 expression at allantois endothelial cell-cell junctions. In Mus musculus (Mouse), this protein is Rap guanine nucleotide exchange factor 2 (Rapgef2).